The chain runs to 91 residues: Small ribosomal subunit protein uS17 (91 aa).

It belongs to the universal ribosomal protein uS17 family. Part of the 30S ribosomal subunit.

In terms of biological role, one of the primary rRNA binding proteins, it binds specifically to the 5'-end of 16S ribosomal RNA. The chain is Small ribosomal subunit protein uS17 from Malacoplasma penetrans (strain HF-2) (Mycoplasma penetrans).